The sequence spans 545 residues: CTP synthase (545 aa).

The interval 1-266 is amidoligase domain; that stretch reads MTTNYIFVTG…DDYICKRFSL (266 aa). Ser-14 provides a ligand contact to CTP. Ser-14 lines the UTP pocket. ATP contacts are provided by residues 15–20 and Asp-72; that span reads SLGKGI. Mg(2+) contacts are provided by Asp-72 and Glu-140. CTP-binding positions include 147-149, 187-192, and Lys-223; these read DIE and KTKPTQ. Residues 187–192 and Lys-223 each bind UTP; that span reads KTKPTQ. Residue 239–241 coordinates ATP; that stretch reads KDV. The 252-residue stretch at 291-542 folds into the Glutamine amidotransferase type-1 domain; that stretch reads TIGMIGKYVE…VKAAGDYQKR (252 aa). Gly-352 serves as a coordination point for L-glutamine. The Nucleophile; for glutamine hydrolysis role is filled by Cys-379. Residues 380–383, Glu-403, and Arg-470 each bind L-glutamine; that span reads LGMQ. Catalysis depends on residues His-515 and Glu-517.

The protein belongs to the CTP synthase family. As to quaternary structure, homotetramer.

The catalysed reaction is UTP + L-glutamine + ATP + H2O = CTP + L-glutamate + ADP + phosphate + 2 H(+). It carries out the reaction L-glutamine + H2O = L-glutamate + NH4(+). It catalyses the reaction UTP + NH4(+) + ATP = CTP + ADP + phosphate + 2 H(+). It participates in pyrimidine metabolism; CTP biosynthesis via de novo pathway; CTP from UDP: step 2/2. Its activity is regulated as follows. Allosterically activated by GTP, when glutamine is the substrate; GTP has no effect on the reaction when ammonia is the substrate. The allosteric effector GTP functions by stabilizing the protein conformation that binds the tetrahedral intermediate(s) formed during glutamine hydrolysis. Inhibited by the product CTP, via allosteric rather than competitive inhibition. Catalyzes the ATP-dependent amination of UTP to CTP with either L-glutamine or ammonia as the source of nitrogen. Regulates intracellular CTP levels through interactions with the four ribonucleotide triphosphates. This Yersinia pseudotuberculosis serotype O:1b (strain IP 31758) protein is CTP synthase.